The chain runs to 230 residues: Aquaporin Z (230 aa).

2 helical membrane passes run 9–29 (AELI…VLAA) and 35–55 (IGVL…AFAI). Residues 64-66 (NPA) carry the NPA 1 motif. The next 3 membrane-spanning stretches (helical) occupy residues 83-103 (LPYV…IYLI), 131-151 (LGAG…VIMG), and 160-180 (GFAP…SIPV). The short motif at 186–188 (NPA) is the NPA 2 element. Residues 194-214 (ALFVGGWALQQLWLFWVAPLI) traverse the membrane as a helical segment.

This sequence belongs to the MIP/aquaporin (TC 1.A.8) family. As to quaternary structure, homotetramer.

It localises to the cell inner membrane. The enzyme catalyses H2O(in) = H2O(out). Channel that permits osmotically driven movement of water in both directions. It is involved in the osmoregulation and in the maintenance of cell turgor during volume expansion in rapidly growing cells. It mediates rapid entry or exit of water in response to abrupt changes in osmolarity. In Pseudomonas putida (strain ATCC 47054 / DSM 6125 / CFBP 8728 / NCIMB 11950 / KT2440), this protein is Aquaporin Z.